Reading from the N-terminus, the 415-residue chain is Cysteate synthase (415 aa).

N6-(pyridoxal phosphate)lysine is present on lysine 104. Pyridoxal 5'-phosphate-binding residues include asparagine 131 and threonine 376.

It belongs to the threonine synthase family. Cysteate synthase subfamily. In terms of assembly, homotrimer. Pyridoxal 5'-phosphate serves as cofactor.

It catalyses the reaction O-phospho-L-serine + sulfite + H(+) = L-cysteate + phosphate. Its pathway is cofactor biosynthesis; coenzyme M biosynthesis. Specifically catalyzes the beta-elimination of phosphate from L-phosphoserine and the beta-addition of sulfite to the dehydroalanine intermediate to produce L-cysteate. This is Cysteate synthase from Methanothrix thermoacetophila (strain DSM 6194 / JCM 14653 / NBRC 101360 / PT) (Methanosaeta thermophila).